The sequence spans 632 residues: Phospholipid:diacylglycerol acyltransferase (632 aa).

Basic residues predominate over residues 1-15 (MASSKKSKTHKKKKE). The segment at 1-47 (MASSKKSKTHKKKKEVKSPIDLPNSKKPTRALSEQPSASETQSVSNK) is disordered. Topologically, residues 1–56 (MASSKKSKTHKKKKEVKSPIDLPNSKKPTRALSEQPSASETQSVSNKSRKSKFGKR) are cytoplasmic. Residues 32 to 46 (LSEQPSASETQSVSN) are compositionally biased toward polar residues. Residues 57–77 (LNFILGAILGICGAFFFAVGD) form a helical membrane-spanning segment. Residues 78–632 (DNAVFDPATL…NEINLDKPRN (555 aa)) lie on the Lumenal side of the membrane. Asp-136 provides a ligand contact to substrate. Ser-293 functions as the Acyl-ester intermediate in the catalytic mechanism. Met-294 is a binding site for substrate. Catalysis depends on charge relay system residues Asp-535 and His-586.

Belongs to the AB hydrolase superfamily. Lipase family.

It is found in the endoplasmic reticulum membrane. It carries out the reaction a glycerophospholipid + a 1,2-diacyl-sn-glycerol = a monoacylglycerophospholipid + a triacyl-sn-glycerol. It participates in glycerolipid metabolism; triacylglycerol biosynthesis. Its function is as follows. Catalyzes triacylglycerol (TAG) formation by an acyl-CoA independent pathway. The enzyme specifically transfers acyl groups from the sn-2 position of a phospholipid to diacylglycerol (DAG), thus forming an sn-1-lysophospholipid. Plays a major role in triacylglycerol formation at log phase. Involved in lipid particle synthesis from the endoplasmic reticulum, promoting localized TAG production at discrete ER subdomains. The chain is Phospholipid:diacylglycerol acyltransferase (plh1) from Schizosaccharomyces pombe (strain 972 / ATCC 24843) (Fission yeast).